The primary structure comprises 323 residues: Melanocortin receptor 3 (323 aa).

The Extracellular portion of the chain corresponds to 1-37; that stretch reads MNSSCCPSSSYPTLPNLSQHPAAPSASNRSGSGFCEQ. N-linked (GlcNAc...) asparagine glycans are attached at residues Asn-2, Asn-16, and Asn-28. The chain crosses the membrane as a helical span at residues 38-63; it reads VFIKPEVFLALGIVSLMENILVILAV. The Cytoplasmic segment spans residues 64–75; it reads VRNGNLHSPMYF. A helical membrane pass occupies residues 76 to 100; sequence FLCSLAAADMLVSLSNSLETIMIVV. Topologically, residues 101 to 118 are extracellular; the sequence is INSDSLTLEDQFIQHMDN. Residues 119-140 traverse the membrane as a helical segment; it reads IFDSMICISLVASICNLLAIAV. Topologically, residues 141 to 160 are cytoplasmic; the sequence is DRYVTIFYALRYHSIMTVRK. A helical membrane pass occupies residues 161 to 181; sequence ALSLIVAIWVCCGICGVMFIV. At 182-186 the chain is on the extracellular side; sequence YSESK. The chain crosses the membrane as a helical span at residues 187–210; that stretch reads MVIVCLITMFFAMVLLMGTLYIHM. The Cytoplasmic segment spans residues 211–245; the sequence is FLFARLHVQRIAALPPADGVAPQQHSCMKGAVTIT. A helical transmembrane segment spans residues 246 to 268; it reads ILLGVFIFCWAPFFLHLVLIITC. Topologically, residues 269-277 are extracellular; it reads PTNPYCICY. A helical membrane pass occupies residues 278-301; that stretch reads TAHFNTYLVLIMCNSVIDPLIYAF. Residues 302–323 lie on the Cytoplasmic side of the membrane; sequence RSLELRNTFKEILCGCNGMNVG. A lipid anchor (S-palmitoyl cysteine) is attached at Cys-315.

It belongs to the G-protein coupled receptor 1 family. As to expression, brain.

It is found in the cell membrane. Receptor for MSH (alpha, beta and gamma) and ACTH. This receptor is mediated by G proteins which activate adenylate cyclase. Required for expression of anticipatory patterns of activity and wakefulness during periods of limited nutrient availability and for the normal regulation of circadian clock activity in the brain. This Rattus norvegicus (Rat) protein is Melanocortin receptor 3 (Mc3r).